The following is a 716-amino-acid chain: Delta-1-pyrroline-5-carboxylate synthase 1 (716 aa).

The tract at residues 1-296 (MASVDPSRSF…WESSKDVSTR (296 aa)) is glutamate 5-kinase. Substrate contacts are provided by Ser60, Asp157, and Asn176. ATP-binding positions include 196 to 197 (SD), 202 to 207 (YSGPPS), and 236 to 242 (RGGMTAK). Residues 297 to 716 (EMAVAARDCS…VYTHKSLPLQ (420 aa)) form a gamma-glutamyl phosphate reductase region.

It in the N-terminal section; belongs to the glutamate 5-kinase family. In the C-terminal section; belongs to the gamma-glutamyl phosphate reductase family. In terms of tissue distribution, expressed at high levels in leaves.

It catalyses the reaction L-glutamate + ATP = L-glutamyl 5-phosphate + ADP. It carries out the reaction L-glutamate 5-semialdehyde + phosphate + NADP(+) = L-glutamyl 5-phosphate + NADPH + H(+). It functions in the pathway amino-acid biosynthesis; L-proline biosynthesis; L-glutamate 5-semialdehyde from L-glutamate: step 1/2. It participates in amino-acid biosynthesis; L-proline biosynthesis; L-glutamate 5-semialdehyde from L-glutamate: step 2/2. Its activity is regulated as follows. Feedback regulated by proline. Its function is as follows. P5CS plays a key role in proline biosynthesis, leading to osmoregulation in plants. Involved in abiotic stress tolerance. The polypeptide is Delta-1-pyrroline-5-carboxylate synthase 1 (Oryza sativa subsp. japonica (Rice)).